We begin with the raw amino-acid sequence, 240 residues long: Zinc finger CCCH domain-containing protein 52 (240 aa).

2 disordered regions span residues M1–S37 and S81–G106. The C3H1-type 1 zinc-finger motif lies at G36 to P64. The segment covering G89–G104 has biased composition (gly residues). The region spanning A113–V177 is the KH domain. The segment at N205–S232 adopts a C3H1-type 2 zinc-finger fold.

The protein is Zinc finger CCCH domain-containing protein 52 of Arabidopsis thaliana (Mouse-ear cress).